The following is a 232-amino-acid chain: Histone H1-II (232 aa).

Residues 1-18 (MSDPAPEVAPAAPVASPA) show a composition bias toward low complexity. Disordered stretches follow at residues 1-44 (MSDP…PPVS) and 103-232 (GKGA…AKKA). The 76-residue stretch at 39-114 (THPPVSEMVV…GASGSFKLPA (76 aa)) folds into the H15 domain. Composition is skewed to basic residues over residues 149-171 (SIAK…KSTK) and 179-232 (AAKK…AKKA).

This sequence belongs to the histone H1/H5 family.

The protein localises to the nucleus. It localises to the chromosome. In terms of biological role, histones H1 are necessary for the condensation of nucleosome chains into higher-order structures. This chain is Histone H1-II, found in Glyptotendipes barbipes (Midge).